The primary structure comprises 423 residues: MKEIISRHKAGEQIGICSVCSAHPLVIESALRFDLNSGNKVLIEATSNQVNQFGGYTGMKPADFRDFVYGIAQEVGFPRERLILGGDHLGPNCWQNEPAAAAMEKSVELIKAYVAAGFSKIHLDASMSCADDPTPLDPMVVAKRAALLCQAAETTATDEQKRHLTYVIGTEVPVPGGEASAINAVHVTREQDAARTLQTHQAAFRVLGLDEALNRVIAIVVQPGVEFDHTQIIHYQPQAAQALSAWIKETPMVYEAHSTDYQTRQAYRALVRDHYAILKVGPALTFALREAIFALAQMENELISPEQRSRVLEVIDEVMLNEPGYWKKYYRPTWSQAMVDIHFSLSDRIRYYWPHPRIRQSVEKLIANLNNVTLPLGLISQFMPVQFERLSEGVLTPTPHNLIIDKIQDVLRAYRFGCTPDVA.

This sequence belongs to the GatZ/KbaZ family. GatZ subfamily. As to quaternary structure, forms a complex with GatY.

Its pathway is carbohydrate metabolism; D-tagatose 6-phosphate degradation; D-glyceraldehyde 3-phosphate and glycerone phosphate from D-tagatose 6-phosphate: step 2/2. Functionally, component of the tagatose-1,6-bisphosphate aldolase GatYZ that is required for full activity and stability of the Y subunit. Could have a chaperone-like function for the proper and stable folding of GatY. When expressed alone, GatZ does not show any aldolase activity. Is involved in the catabolism of galactitol. This Salmonella newport (strain SL254) protein is D-tagatose-1,6-bisphosphate aldolase subunit GatZ.